The primary structure comprises 638 residues: MSRTNMDTRHAHSALLAAPQSATANSRSSNSSSESSSNKNNINVGVGDDSGNVSAVSIDDGPHFRDIFHYGHEENYKLASSGITNLNSSSHAHQTLSPISISNASTPESFPEHPLGLERETEPALEAEMEAEELPPHQSKYLLSSIKATKRLKDARPFLKPVDPIALNIPHYFNYVQTPMDLSLIETKLQGNVYHSVEQVTSDFKTMVDNCLNFNGPESSISSMAKRIQKYFEKKLSAMPPRVLPASALKKTSRNRKKNEDMDSPLVIRRSVSTTNDNIGESGNREGVSGGRPKRTIHPPKSKDLFDIYENSKPKSKTLQKKFRTCLKILKVLMSKKNSDINFPFLQPVDPIALNLPNYFDVVKNPMDLGTISNNLMNWKYKTIDQFVDDLNLVFYNCFQFNPEGNEVHSMGKKLKELFNFHWLENQDILNEIETDSDLEEDNYSSSYSSDDEYDDEDINENDITNPAIQYLEQKLKKMEVELQQLKRQELSKLSKERKRKHLGKTLLRRKAMKHSVDDLKKSITDKINELSDLEMNGMIRIIKNSLPADEILTSNEDEIEIDLDILDEATIARIYERYFEKKNNNNSKRKLSGNYSTAPTNKKKKTLKFLEKDEIINNNNYSDSEEDSSDSSDSDSD.

Residues 1–10 show a composition bias toward basic and acidic residues; that stretch reads MSRTNMDTRH. The interval 1 to 54 is disordered; it reads MSRTNMDTRHAHSALLAAPQSATANSRSSNSSSESSSNKNNINVGVGDDSGNVS. Low complexity predominate over residues 25 to 43; the sequence is NSRSSNSSSESSSNKNNIN. A Bromo 1 domain is found at 130 to 239; that stretch reads EAEELPPHQS…KYFEKKLSAM (110 aa). Residues 250-306 form a disordered region; the sequence is KKTSRNRKKNEDMDSPLVIRRSVSTTNDNIGESGNREGVSGGRPKRTIHPPKSKDLF. Ser-264 carries the post-translational modification Phosphoserine. Residues 271 to 281 show a composition bias toward polar residues; it reads SVSTTNDNIGE. The Bromo 2 domain occupies 317 to 426; sequence KTLQKKFRTC…ELFNFHWLEN (110 aa). The segment at 435–460 is disordered; sequence TDSDLEEDNYSSSYSSDDEYDDEDIN. Residues 450–460 show a composition bias toward acidic residues; that stretch reads SDDEYDDEDIN. The stretch at 468-537 forms a coiled coil; it reads AIQYLEQKLK…INELSDLEMN (70 aa). Positions 506–590 constitute an NET domain; it reads TLLRRKAMKH…EKKNNNNSKR (85 aa). Positions 586–638 are disordered; the sequence is NNSKRKLSGNYSTAPTNKKKKTLKFLEKDEIINNNNYSDSEEDSSDSSDSDSD. Residues 624-638 show a composition bias toward acidic residues; it reads DSEEDSSDSSDSDSD.

It belongs to the BET family. As to quaternary structure, interacts with the TFIID subunit TAF7 and with histone H4. Post-translationally, phosphorylated by the casein kinase CK2 complex.

Its subcellular location is the cytoplasm. It localises to the nucleus. Its function is as follows. Transcription factor involved in the expression of a broad class of genes including snRNAs. Required for sporulation and DNA-damage repair. Prevents the spreading of SIR silencing at telomeres and protects histone H4, but not H3, from deacetylation. The polypeptide is Bromodomain-containing factor 2 (BDF2) (Saccharomyces cerevisiae (strain ATCC 204508 / S288c) (Baker's yeast)).